The sequence spans 425 residues: Enolase (425 aa).

(2R)-2-phosphoglycerate is bound at residue Gln163. The Proton donor role is filled by Glu205. 3 residues coordinate Mg(2+): Asp242, Glu286, and Asp313. (2R)-2-phosphoglycerate is bound by residues Lys338, Arg367, Ser368, and Lys389. The Proton acceptor role is filled by Lys338.

The protein belongs to the enolase family. The cofactor is Mg(2+).

The protein resides in the cytoplasm. Its subcellular location is the secreted. It localises to the cell surface. The enzyme catalyses (2R)-2-phosphoglycerate = phosphoenolpyruvate + H2O. The protein operates within carbohydrate degradation; glycolysis; pyruvate from D-glyceraldehyde 3-phosphate: step 4/5. In terms of biological role, catalyzes the reversible conversion of 2-phosphoglycerate (2-PG) into phosphoenolpyruvate (PEP). It is essential for the degradation of carbohydrates via glycolysis. This is Enolase from Lactobacillus delbrueckii subsp. bulgaricus (strain ATCC 11842 / DSM 20081 / BCRC 10696 / JCM 1002 / NBRC 13953 / NCIMB 11778 / NCTC 12712 / WDCM 00102 / Lb 14).